We begin with the raw amino-acid sequence, 325 residues long: Tetraacyldisaccharide 4'-kinase (325 aa).

Residue 58–65 (TVGGSGKT) participates in ATP binding.

The protein belongs to the LpxK family.

The catalysed reaction is a lipid A disaccharide + ATP = a lipid IVA + ADP + H(+). Its pathway is glycolipid biosynthesis; lipid IV(A) biosynthesis; lipid IV(A) from (3R)-3-hydroxytetradecanoyl-[acyl-carrier-protein] and UDP-N-acetyl-alpha-D-glucosamine: step 6/6. Transfers the gamma-phosphate of ATP to the 4'-position of a tetraacyldisaccharide 1-phosphate intermediate (termed DS-1-P) to form tetraacyldisaccharide 1,4'-bis-phosphate (lipid IVA). The polypeptide is Tetraacyldisaccharide 4'-kinase (Coxiella burnetii (strain Dugway 5J108-111)).